A 116-amino-acid polypeptide reads, in one-letter code: Large ribosomal subunit protein uL18 (116 aa).

Belongs to the universal ribosomal protein uL18 family. Part of the 50S ribosomal subunit; part of the 5S rRNA/L5/L18/L25 subcomplex. Contacts the 5S and 23S rRNAs.

Functionally, this is one of the proteins that bind and probably mediate the attachment of the 5S RNA into the large ribosomal subunit, where it forms part of the central protuberance. The protein is Large ribosomal subunit protein uL18 of Hahella chejuensis (strain KCTC 2396).